A 96-amino-acid polypeptide reads, in one-letter code: CRISPR-associated endoribonuclease Cas2 1 (96 aa).

Aspartate 8 lines the Mg(2+) pocket.

It belongs to the CRISPR-associated endoribonuclease Cas2 protein family. Homodimer, forms a heterotetramer with a Cas1 homodimer. It depends on Mg(2+) as a cofactor.

Functionally, CRISPR (clustered regularly interspaced short palindromic repeat), is an adaptive immune system that provides protection against mobile genetic elements (viruses, transposable elements and conjugative plasmids). CRISPR clusters contain sequences complementary to antecedent mobile elements and target invading nucleic acids. CRISPR clusters are transcribed and processed into CRISPR RNA (crRNA). Functions as a ssRNA-specific endoribonuclease. Involved in the integration of spacer DNA into the CRISPR cassette. This is CRISPR-associated endoribonuclease Cas2 1 from Moorella thermoacetica (strain ATCC 39073 / JCM 9320).